The following is a 430-amino-acid chain: Dihydrolipoyllysine-residue acetyltransferase component of pyruvate dehydrogenase complex (430 aa).

One can recognise a Lipoyl-binding domain in the interval 2 to 77; it reads AFEFRLPDIG…VVGDVIVKID (76 aa). Position 43 is an N6-lipoyllysine (Lys-43). Residues 80 to 122 form a disordered region; that stretch reads DAEDMQFKGHDDDSSSKEEPAKEEAPAEQAPVATQTEEVDENR. A compositionally biased stretch (basic and acidic residues) spans 84 to 104; that stretch reads MQFKGHDDDSSSKEEPAKEEA. Residues 125 to 162 form the Peripheral subunit-binding (PSBD) domain; that stretch reads KAMPSVRKYAREKGVNIKAVSGSGKNGRITKEDVDAYL. Residues 164–200 are disordered; the sequence is GGAPTASNESADSATNEEVAETPAAPAAVSLEGDFPE. Low complexity predominate over residues 177–192; that stretch reads ATNEEVAETPAAPAAV. Residue His-401 is part of the active site.

It belongs to the 2-oxoacid dehydrogenase family. In terms of assembly, forms a 24-polypeptide structural core with octahedral symmetry. (R)-lipoate is required as a cofactor.

The enzyme catalyses N(6)-[(R)-dihydrolipoyl]-L-lysyl-[protein] + acetyl-CoA = N(6)-[(R)-S(8)-acetyldihydrolipoyl]-L-lysyl-[protein] + CoA. The pyruvate dehydrogenase complex catalyzes the overall conversion of pyruvate to acetyl-CoA and CO(2). It contains multiple copies of three enzymatic components: pyruvate dehydrogenase (E1), dihydrolipoamide acetyltransferase (E2) and lipoamide dehydrogenase (E3). The sequence is that of Dihydrolipoyllysine-residue acetyltransferase component of pyruvate dehydrogenase complex (pdhC) from Staphylococcus aureus.